The chain runs to 466 residues: 3-isopropylmalate dehydratase large subunit (466 aa).

[4Fe-4S] cluster is bound by residues Cys346, Cys406, and Cys409.

It belongs to the aconitase/IPM isomerase family. LeuC type 1 subfamily. In terms of assembly, heterodimer of LeuC and LeuD. [4Fe-4S] cluster serves as cofactor.

It carries out the reaction (2R,3S)-3-isopropylmalate = (2S)-2-isopropylmalate. It functions in the pathway amino-acid biosynthesis; L-leucine biosynthesis; L-leucine from 3-methyl-2-oxobutanoate: step 2/4. In terms of biological role, catalyzes the isomerization between 2-isopropylmalate and 3-isopropylmalate, via the formation of 2-isopropylmaleate. The sequence is that of 3-isopropylmalate dehydratase large subunit from Alteromonas mediterranea (strain DSM 17117 / CIP 110805 / LMG 28347 / Deep ecotype).